Consider the following 144-residue polypeptide: MPGGKGKSSGGKSSGGKTSGTEGANKKQQSHSARAGLQFPCGRVKRFLKQNTQQKMRVGAKAAVYVTAVLEYLTAEVLELAGNAAKDLKVKRITPRHLQLAIRGDEELDTLIRATIAYGGVLPHINRALLLKVEQKKKAKALEG.

Residues 1–18 show a composition bias toward gly residues; that stretch reads MPGGKGKSSGGKSSGGKT. The interval 1–36 is disordered; that stretch reads MPGGKGKSSGGKSSGGKTSGTEGANKKQQSHSARAG. N6-acetyllysine is present on residues K5 and K12.

It belongs to the histone H2A family. As to quaternary structure, the nucleosome is a histone octamer containing two molecules each of H2A, H2B, H3 and H4 assembled in one H3-H4 heterotetramer and two H2A-H2B heterodimers. The octamer wraps approximately 147 bp of DNA. H2A or its variant H2A.Z forms a heterodimer with H2B. H2A.Z associates with the VPS72/SWC2 subunit of the SWR1 chromatin remodeling complex. Also interacts with RBP1/DNA-directed RNA polymerase II largest subunit. Post-translationally, acetylated once deposited into chromatin.

Its subcellular location is the nucleus. It localises to the chromosome. In terms of biological role, variant histone H2A which can replace H2A in some nucleosomes. Nucleosomes wrap and compact DNA into chromatin, limiting DNA accessibility to the cellular machineries which require DNA as a template. Histones thereby play a central role in transcription regulation, DNA repair, DNA replication and chromosomal stability. DNA accessibility is regulated via a complex set of post-translational modifications of histones, also called histone code, and nucleosome remodeling. This variant is enriched at promoters, it may keep them in a repressed state until the appropriate activation signal is received. Near telomeres, it may counteract gene silencing caused by the spread of heterochromatin proteins. Required for the RNA polymerase II and SPT15/TBP recruitment to the target genes. Involved in chromosome stability. This is Histone H2A.Z (HTZ1) from Gibberella zeae (strain ATCC MYA-4620 / CBS 123657 / FGSC 9075 / NRRL 31084 / PH-1) (Wheat head blight fungus).